Consider the following 517-residue polypeptide: GMP synthase [glutamine-hydrolyzing] (517 aa).

The region spanning 9 to 199 is the Glutamine amidotransferase type-1 domain; it reads RILILDFGSQ…VLGVCGCERL (191 aa). Cys-86 serves as the catalytic Nucleophile. Residues His-173 and Glu-175 contribute to the active site. Residues 200–392 form the GMPS ATP-PPase domain; that stretch reads WTSESIIEDA…LGLPYNMLYR (193 aa). Position 227 to 233 (227 to 233) interacts with ATP; it reads SGGVDSS.

As to quaternary structure, homodimer.

It carries out the reaction XMP + L-glutamine + ATP + H2O = GMP + L-glutamate + AMP + diphosphate + 2 H(+). Its pathway is purine metabolism; GMP biosynthesis; GMP from XMP (L-Gln route): step 1/1. Catalyzes the synthesis of GMP from XMP. This Vibrio campbellii (strain ATCC BAA-1116) protein is GMP synthase [glutamine-hydrolyzing].